The primary structure comprises 366 residues: Cobalt-precorrin-5B C(1)-methyltransferase (366 aa).

The protein belongs to the CbiD family.

It catalyses the reaction Co-precorrin-5B + S-adenosyl-L-methionine = Co-precorrin-6A + S-adenosyl-L-homocysteine. Its pathway is cofactor biosynthesis; adenosylcobalamin biosynthesis; cob(II)yrinate a,c-diamide from sirohydrochlorin (anaerobic route): step 6/10. Functionally, catalyzes the methylation of C-1 in cobalt-precorrin-5B to form cobalt-precorrin-6A. The polypeptide is Cobalt-precorrin-5B C(1)-methyltransferase (Paraburkholderia phymatum (strain DSM 17167 / CIP 108236 / LMG 21445 / STM815) (Burkholderia phymatum)).